Reading from the N-terminus, the 188-residue chain is Accessory gene regulator protein B (188 aa).

The next 4 helical transmembrane spans lie at 49–69 (VALLFHTFLYTLITHLTYFFV), 82–102 (LLCHIQNLVLFVALPWSIVHF), 104–124 (VSWTFMIFVAFIAFIIIICYA), and 163–183 (YMQLIALGMCIEAITLLPIFF).

It belongs to the AgrB family.

It is found in the cell membrane. Functionally, essential for the production of a quorum sensing system signal molecule, the autoinducing peptide (AIP). This quorum sensing system is responsible for the regulation of the expression of virulence factor genes. Involved in the proteolytic processing of AgrD, the precursor of AIP. This chain is Accessory gene regulator protein B, found in Staphylococcus lugdunensis.